Here is a 251-residue protein sequence, read N- to C-terminus: Small ribosomal subunit protein uS4c (251 aa).

S4 RNA-binding domains follow at residues 110–170 (MRLD…KLVN) and 189–251 (RTLA…QFSE).

The protein belongs to the universal ribosomal protein uS4 family. As to quaternary structure, part of the 30S ribosomal subunit. Contacts protein S5. The interaction surface between S4 and S5 is involved in control of translational fidelity.

The protein resides in the plastid. It is found in the chloroplast. One of the primary rRNA binding proteins, it binds directly to 16S rRNA where it nucleates assembly of the body of the 30S subunit. Its function is as follows. With S5 and S12 plays an important role in translational accuracy. This Tetradesmus obliquus (Green alga) protein is Small ribosomal subunit protein uS4c (rps4).